We begin with the raw amino-acid sequence, 93 residues long: Large ribosomal subunit protein bL27 (93 aa).

A propeptide spanning residues 1–8 (MIMDLQFF) is cleaved from the precursor. A disordered region spans residues 8-29 (FSHHKGGGSTANGRNSAGRRLG).

Belongs to the bacterial ribosomal protein bL27 family. Post-translationally, the N-terminus is cleaved by ribosomal processing cysteine protease Prp.

This is Large ribosomal subunit protein bL27 from Limosilactobacillus reuteri (strain DSM 20016) (Lactobacillus reuteri).